We begin with the raw amino-acid sequence, 471 residues long: 5-hydroxytryptamine receptor 2B (471 aa).

Topologically, residues 1–26 (MFQAAVGPLQTNISLPEETPGLELNW) are extracellular. N-linked (GlcNAc...) asparagine glycosylation occurs at Asn-12. Residues 27 to 49 (AALLIVMVIIPTIGGNILVILAV) form a helical membrane-spanning segment. Topologically, residues 50–60 (WLEKKLQNATN) are cytoplasmic. A helical transmembrane segment spans residues 61-83 (FFLMSLAVADLLVGLLVMPIALI). Topologically, residues 84-99 (TILYDSDWPLPEPLCP) are extracellular. Cys-98 and Cys-182 form a disulfide bridge. Residues 100 to 121 (IWLFLDVLFSTASIMHLCAISL) traverse the membrane as a helical segment. Asp-105 and Thr-110 together coordinate ergotamine. The DRY motif; important for ligand-induced conformation changes motif lies at 122–124 (DRY). The Cytoplasmic portion of the chain corresponds to 122-141 (DRYIAIKKPIQHSQYKSRAK). Residues 142–162 (VMLKIALVWLISICIAIPIPI) form a helical membrane-spanning segment. Over 163 to 191 (KGLRNYPHPNNITFTSNHTCVLKTDTFQE) the chain is Extracellular. N-linked (GlcNAc...) asparagine glycans are attached at residues Asn-173 and Asn-179. Residue Leu-184 participates in ergotamine binding. Residues 187-190 (DTFQ) carry the [DE]RFG motif; may stabilize a conformation that preferentially activates signaling via beta-arrestin family members motif. The chain crosses the membrane as a helical span at residues 192-214 (FIIFGSLVAFFIPLTIMMIIYFL). Residues 215–308 (TVRVLRKKVY…TLTNEQRASK (94 aa)) lie on the Cytoplasmic side of the membrane. Residues 309-329 (VLGIVFLLFVVMWCPFFITNI) traverse the membrane as a helical segment. Over 330 to 344 (TSALCGPCDANIIGR) the chain is Extracellular. A disulfide bridge connects residues Cys-334 and Cys-337. The helical transmembrane segment at 345–366 (LMEIFSWVGYVSSGINPLVYTL) threads the bilayer. Residues 360–364 (NPLVY) carry the NPxxY motif; important for ligand-induced conformation changes and signaling motif. Residues 367-471 (FNKTFRQAFT…CKQEERVSCV (105 aa)) lie on the Cytoplasmic side of the membrane. The S-palmitoyl cysteine moiety is linked to residue Cys-381. A PDZ-binding motif is present at residues 469–471 (SCV).

The protein belongs to the G-protein coupled receptor 1 family. In terms of tissue distribution, detected in brain, heart and gut.

It localises to the cell membrane. The protein resides in the synapse. The protein localises to the synaptosome. Functionally, G-protein coupled receptor for 5-hydroxytryptamine (serotonin). Also functions as a receptor for various ergot alkaloid derivatives and psychoactive substances. Ligand binding causes a conformation change that triggers signaling via guanine nucleotide-binding proteins (G proteins) and modulates the activity of downstream effectors. HTR2B is coupled to G(q)/G(11) G alpha proteins and activates phospholipase C-beta, releasing diacylglycerol (DAG) and inositol 1,4,5-trisphosphate (IP3) second messengers that modulate the activity of phosphatidylinositol 3-kinase and promote the release of Ca(2+) ions from intracellular stores, respectively. Beta-arrestin family members inhibit signaling via G proteins and mediate activation of alternative signaling pathways. Plays a role in the regulation of dopamine and 5-hydroxytryptamine release, 5-hydroxytryptamine uptake and in the regulation of extracellular dopamine and 5-hydroxytryptamine levels, and thereby affects neural activity. The polypeptide is 5-hydroxytryptamine receptor 2B (htr2b) (Dichotomyctere fluviatilis (Green pufferfish)).